We begin with the raw amino-acid sequence, 303 residues long: Sulfotransferase 6B1 (303 aa).

65 to 70 contacts 3'-phosphoadenylyl sulfate; that stretch reads KCGSNW. H118 acts as the Proton acceptor in catalysis. 3'-phosphoadenylyl sulfate-binding positions include R140, S148, Y203, 237-242, and 259-261; these read STFLAM and RKG.

The protein belongs to the sulfotransferase 1 family. As to expression, expressed in brain, heart, kidney, thymus, lung, liver and testis.

The protein resides in the cytoplasm. The protein localises to the cytosol. It catalyses the reaction thyroxine + 3'-phosphoadenylyl sulfate = thyroxine sulfate + adenosine 3',5'-bisphosphate + H(+). Sulfotransferase that utilizes 3'-phospho-5'-adenylyl sulfate (PAPS) as sulfonate donor to catalyze the sulfate conjugation of thyroxine. Involved in the metabolism of thyroxine. This Mus musculus (Mouse) protein is Sulfotransferase 6B1 (Sult6b1).